A 224-amino-acid polypeptide reads, in one-letter code: Coiled-coil domain-containing protein 43 (224 aa).

Lys95 is covalently cross-linked (Glycyl lysine isopeptide (Lys-Gly) (interchain with G-Cter in SUMO1)). Coiled coils occupy residues 121–145 (SEEEKQRKAALLAQYADVTDEEDEA) and 177–218 (RKLE…KRTQ). Acidic residues predominate over residues 138 to 149 (VTDEEDEADEKD). 2 disordered regions span residues 138–157 (VTDEEDEADEKDDSGATTMN) and 176–224 (ARKL…ERKR). At Thr139 the chain carries Phosphothreonine. Residues 176-211 (ARKLERDSLRDESQRKKEQDKLQRERDKLAKQERKE) are compositionally biased toward basic and acidic residues. The segment covering 212 to 224 (KEKKRTQRGERKR) has biased composition (basic residues).

Belongs to the CCDC43 family.

This Homo sapiens (Human) protein is Coiled-coil domain-containing protein 43 (CCDC43).